The following is a 95-amino-acid chain: Integration host factor subunit beta (95 aa).

It belongs to the bacterial histone-like protein family. Heterodimer of an alpha and a beta chain.

Functionally, this protein is one of the two subunits of integration host factor, a specific DNA-binding protein that functions in genetic recombination as well as in transcriptional and translational control. This chain is Integration host factor subunit beta, found in Shewanella halifaxensis (strain HAW-EB4).